We begin with the raw amino-acid sequence, 349 residues long: MAANGLMAASSVFLHRPVHPHFSFSSRTNQMVPLGFKGRVSFIGNVKRCFPVVLSMGKSETFEEAGNSVAPGNGISIMVNGCSGKMGKAVIKAADSAGVNIVPTSFGSVEEAGQTVEVCGKEILVHGPTEREKVLSSVFEKYPELIVVDYTIPSAVNDNAELYGKVGVPFVMGTTGGDRTRLYKTVEESKIYAVISPQMGKQVVAFLAAMEIMSEQFPGAFAGYSLEVMESHQASKLDASGTAKAVISCFQKLGVSYDMDQIQLIRDPKQQIEVVGVPEEHVSGHAFHLYHLTSPDKTVSFEFQHNVCGRSIYAEGTVDAVLFLAKKIRSKAEKRIYNMIDVLREGNMR.

Residues 1-53 constitute a chloroplast transit peptide; the sequence is MAANGLMAASSVFLHRPVHPHFSFSSRTNQMVPLGFKGRVSFIGNVKRCFPVV. NAD(+) contacts are provided by residues 81–86, 173–175, and 196–199; these read GCSGKM, GTT, and SPQM. The active-site Proton donor/acceptor is H232. Residue K236 is the Proton donor of the active site. (S)-2,3,4,5-tetrahydrodipicolinate is bound at residue 241-242; the sequence is GT.

It belongs to the DapB family.

Its subcellular location is the plastid. The protein localises to the chloroplast. The catalysed reaction is (S)-2,3,4,5-tetrahydrodipicolinate + NAD(+) + H2O = (2S,4S)-4-hydroxy-2,3,4,5-tetrahydrodipicolinate + NADH + H(+). It catalyses the reaction (S)-2,3,4,5-tetrahydrodipicolinate + NADP(+) + H2O = (2S,4S)-4-hydroxy-2,3,4,5-tetrahydrodipicolinate + NADPH + H(+). It functions in the pathway amino-acid biosynthesis; L-lysine biosynthesis via DAP pathway; (S)-tetrahydrodipicolinate from L-aspartate: step 4/4. In terms of biological role, catalyzes the conversion of 4-hydroxy-tetrahydrodipicolinate (HTPA) to tetrahydrodipicolinate. The polypeptide is 4-hydroxy-tetrahydrodipicolinate reductase 2, chloroplastic (DAPB2) (Arabidopsis thaliana (Mouse-ear cress)).